The following is a 138-amino-acid chain: MRTLWIVAVLLVSVEGHLLQFNKMIKIMTRKNAFPFYTSYGCYCGWGGRGWPKDATDSCCFVHDCCYQKLTGCSPKWDIYPYSWKTGVIICGEGTPCEKEICECDRAAAVCLGENLRTYKTKYMFYPDFLCKKPSKQC.

A signal peptide spans 1 to 16; the sequence is MRTLWIVAVLLVSVEG. Cystine bridges form between C42-C131, C44-C60, C59-C111, C65-C138, C66-C104, C73-C97, and C91-C102. Ca(2+)-binding residues include Y43, G45, and G47. H63 is an active-site residue. D64 serves as a coordination point for Ca(2+). D105 is a catalytic residue.

Ca(2+) is required as a cofactor. In terms of tissue distribution, expressed by the venom gland.

It localises to the secreted. The catalysed reaction is a 1,2-diacyl-sn-glycero-3-phosphocholine + H2O = a 1-acyl-sn-glycero-3-phosphocholine + a fatty acid + H(+). Functionally, snake venom phospholipase A2 (PLA2) that inhibits neuromuscular transmission by blocking acetylcholine release from the nerve termini. PLA2 catalyzes the calcium-dependent hydrolysis of the 2-acyl groups in 3-sn-phosphoglycerides. In Deinagkistrodon acutus (Hundred-pace snake), this protein is Basic phospholipase A2 DAV-N6.